The following is a 182-amino-acid chain: Putative manganese efflux pump MntP (182 aa).

6 consecutive transmembrane segments (helical) span residues 6–26 (TVLVALALGCDAFAVGMGVGT), 37–57 (LSFHFGLFQMMMPIAGWFVGS), 59–79 (AADLVSTWGPWISFALLLFIG), 104–126 (SSLVMLSVATSMDALGVGFSFGI), 131–149 (LFLSAVWIGITAGIMTWGA), and 164–181 (METVGGLILVAIAVKLLL).

It belongs to the MntP (TC 9.B.29) family.

Its subcellular location is the cell inner membrane. In terms of biological role, probably functions as a manganese efflux pump. The chain is Putative manganese efflux pump MntP from Syntrophobacter fumaroxidans (strain DSM 10017 / MPOB).